We begin with the raw amino-acid sequence, 215 residues long: MAVSVKICGLTEAAGLAAAVDAGARYVGFVFFPKSPRHVTPGTAAELAAQVPLGVAKVGLFVNPDDAALDAVLAHVPLDVIQLHGAETPARVAEVKARTGLPVMKAVGVADPQDLDALWDYGLVADMLLIDAKPPKDAVLPGGNGLAFDWRLLAGRQILKPWLLAGGLTPENVHEAIRLTRAPGVDVSSGVESAPGVKDPDRIRSFIARATAPIL.

It belongs to the TrpF family.

It catalyses the reaction N-(5-phospho-beta-D-ribosyl)anthranilate = 1-(2-carboxyphenylamino)-1-deoxy-D-ribulose 5-phosphate. The protein operates within amino-acid biosynthesis; L-tryptophan biosynthesis; L-tryptophan from chorismate: step 3/5. The sequence is that of N-(5'-phosphoribosyl)anthranilate isomerase from Paracoccus denitrificans (strain Pd 1222).